We begin with the raw amino-acid sequence, 549 residues long: Glucose-6-phosphate isomerase (549 aa).

Glutamate 355 functions as the Proton donor in the catalytic mechanism. Active-site residues include histidine 387 and lysine 515.

This sequence belongs to the GPI family.

It localises to the cytoplasm. It carries out the reaction alpha-D-glucose 6-phosphate = beta-D-fructose 6-phosphate. The protein operates within carbohydrate biosynthesis; gluconeogenesis. It participates in carbohydrate degradation; glycolysis; D-glyceraldehyde 3-phosphate and glycerone phosphate from D-glucose: step 2/4. In terms of biological role, catalyzes the reversible isomerization of glucose-6-phosphate to fructose-6-phosphate. This chain is Glucose-6-phosphate isomerase, found in Histophilus somni (strain 2336) (Haemophilus somnus).